Here is a 345-residue protein sequence, read N- to C-terminus: Protein lifeguard 1 (345 aa).

The interval 1–115 (MSHEKSFLVS…GNYQEEGPPS (115 aa)) is disordered. Pro residues-rich tracts occupy residues 24 to 46 (APMP…PFQP) and 79 to 98 (GPYP…PPFQ). The next 7 membrane-spanning stretches (helical) occupy residues 139-159 (VFLV…IFTF), 171-191 (VWTY…LSCC), 202-222 (LVAL…IASF), 227-247 (AVIM…IFSM), 257-277 (MGVL…CIFI), 281-301 (ILEI…LAVD), and 320-340 (FAAL…LTII).

It belongs to the BI1 family. LFG subfamily.

Its subcellular location is the membrane. Its function is as follows. Potential apoptotic regulator. The sequence is that of Protein lifeguard 1 (Grina) from Mus musculus (Mouse).